The following is a 497-amino-acid chain: Anthranilate synthase component 1 (497 aa).

Residues serine 49 and 271-273 each bind L-tryptophan; that span reads PYL. 312–313 provides a ligand contact to chorismate; that stretch reads GT. Glutamate 339 is a binding site for Mg(2+). Chorismate contacts are provided by residues arginine 447, 461-463, and glycine 463; that span reads GAG. Position 476 (glutamate 476) interacts with Mg(2+).

Belongs to the anthranilate synthase component I family. Heterotetramer consisting of two non-identical subunits: a beta subunit (TrpG) and a large alpha subunit (TrpE). Requires Mg(2+) as cofactor.

It carries out the reaction chorismate + L-glutamine = anthranilate + pyruvate + L-glutamate + H(+). The protein operates within amino-acid biosynthesis; L-tryptophan biosynthesis; L-tryptophan from chorismate: step 1/5. With respect to regulation, feedback inhibited by tryptophan. Functionally, part of a heterotetrameric complex that catalyzes the two-step biosynthesis of anthranilate, an intermediate in the biosynthesis of L-tryptophan. In the first step, the glutamine-binding beta subunit (TrpG) of anthranilate synthase (AS) provides the glutamine amidotransferase activity which generates ammonia as a substrate that, along with chorismate, is used in the second step, catalyzed by the large alpha subunit of AS (TrpE) to produce anthranilate. In the absence of TrpG, TrpE can synthesize anthranilate directly from chorismate and high concentrations of ammonia. The polypeptide is Anthranilate synthase component 1 (trpE) (Acinetobacter calcoaceticus).